Here is a 195-residue protein sequence, read N- to C-terminus: Imidazoleglycerol-phosphate dehydratase (195 aa).

It belongs to the imidazoleglycerol-phosphate dehydratase family.

The protein localises to the cytoplasm. The catalysed reaction is D-erythro-1-(imidazol-4-yl)glycerol 3-phosphate = 3-(imidazol-4-yl)-2-oxopropyl phosphate + H2O. The protein operates within amino-acid biosynthesis; L-histidine biosynthesis; L-histidine from 5-phospho-alpha-D-ribose 1-diphosphate: step 6/9. In Methylorubrum populi (strain ATCC BAA-705 / NCIMB 13946 / BJ001) (Methylobacterium populi), this protein is Imidazoleglycerol-phosphate dehydratase.